The following is a 391-amino-acid chain: 3-ketoacyl-CoA thiolase (391 aa).

Catalysis depends on Cys95, which acts as the Acyl-thioester intermediate. Active-site proton acceptor residues include His347 and Cys377.

Belongs to the thiolase-like superfamily. Thiolase family. In terms of assembly, heterotetramer of two alpha chains (FadB) and two beta chains (FadA).

The protein resides in the cytoplasm. The enzyme catalyses an acyl-CoA + acetyl-CoA = a 3-oxoacyl-CoA + CoA. It functions in the pathway lipid metabolism; fatty acid beta-oxidation. Its function is as follows. Catalyzes the final step of fatty acid oxidation in which acetyl-CoA is released and the CoA ester of a fatty acid two carbons shorter is formed. This is 3-ketoacyl-CoA thiolase from Marinobacter nauticus (strain ATCC 700491 / DSM 11845 / VT8) (Marinobacter aquaeolei).